The chain runs to 176 residues: Nucleoside triphosphate/diphosphate phosphatase (176 aa).

Arg-23 (proton donor) is an active-site residue. Mg(2+) is bound by residues Asn-87, Asp-103, Asp-105, Asp-107, Asp-120, and Glu-123.

The protein belongs to the Ntdp family. Mg(2+) is required as a cofactor.

The catalysed reaction is a ribonucleoside 5'-triphosphate + H2O = a ribonucleoside 5'-diphosphate + phosphate + H(+). It carries out the reaction a ribonucleoside 5'-diphosphate + H2O = a ribonucleoside 5'-phosphate + phosphate + H(+). Functionally, has nucleoside phosphatase activity towards nucleoside triphosphates and nucleoside diphosphates. The polypeptide is Nucleoside triphosphate/diphosphate phosphatase (ygaC) (Bacillus subtilis (strain 168)).